A 366-amino-acid polypeptide reads, in one-letter code: Mitochondrial substrate carrier family protein H (366 aa).

A compositionally biased stretch (low complexity) spans 1–25 (MLSNSVNNNNNNNNINNSNSNNNDS). Residues 1–26 (MLSNSVNNNNNNNNINNSNSNNNDSN) are disordered. Solcar repeat units lie at residues 29–121 (KNVK…LKEY), 132–243 (NIYT…LKNK), and 259–360 (SPFF…IKQS). A run of 6 helical transmembrane segments spans residues 35 to 55 (MVASIFGGIMSSLIVTPLDVV), 96 to 112 (GVTPSLLMTIPSATIYF), 133 to 151 (IYTVPLVAGTLARIFSASV), 175 to 192 (VAMAASSSTATIGTIPLS), 262 to 282 (FINFIAGATSGTLAAVLTTPI), and 340 to 357 (VAKVSPACAIMISTFEYI).

The protein belongs to the mitochondrial carrier (TC 2.A.29) family.

It is found in the mitochondrion inner membrane. Functionally, mitochondrial transporter required for glutathione import into mitochondria. This chain is Mitochondrial substrate carrier family protein H, found in Dictyostelium discoideum (Social amoeba).